Reading from the N-terminus, the 872-residue chain is Sine oculis-binding protein homolog (872 aa).

Residues 1–14 (MAEMEKEGRPPENK) show a composition bias toward basic and acidic residues. A disordered region spans residues 1-26 (MAEMEKEGRPPENKRSRKPAHPVKRE). FCS-type zinc fingers lie at residues 142-180 (DDVS…KCFA) and 216-256 (FKNN…KCLN). Disordered stretches follow at residues 308-354 (RRKA…KSMP), 411-484 (FIRG…PGAP), and 550-619 (KPPN…GRSE). Residues 319–344 (GQSQGPGPSASTTVSPSDTANCSVTK) are compositionally biased toward polar residues. Residues 417 to 433 (HHASNPNSPLSNPMLPG) show a composition bias toward low complexity. Residues 460–484 (IHPPSTPTMPGNPPGLLPPPPPGAP) are compositionally biased toward pro residues. An SUMO interaction motif 1 (SIM); mediates the binding to polysumoylated substrates motif is present at residues 620–624 (VVDLT). At S629 the chain carries Phosphoserine. The short motif at 651–655 (VIDLT) is the SUMO interaction motif 2 (SIM); mediates the binding to polysumoylated substrates element. K675 is covalently cross-linked (Glycyl lysine isopeptide (Lys-Gly) (interchain with G-Cter in SUMO2)). S697 is modified (phosphoserine). The segment at 728–770 (AAEGAKGAEPPPEQPPPPPPPPPAPPKKLLSPEEPAVSELESV) is disordered. The segment covering 736-753 (EPPPEQPPPPPPPPPAPP) has biased composition (pro residues).

Belongs to the SOBP family. As to quaternary structure, interacts (via SIM domains) with SUMO1 and SUMO2.

Its function is as follows. Implicated in development of the cochlea. This chain is Sine oculis-binding protein homolog, found in Bos taurus (Bovine).